The following is an 85-amino-acid chain: Small ribosomal subunit protein uS17 (85 aa).

This sequence belongs to the universal ribosomal protein uS17 family. In terms of assembly, part of the 30S ribosomal subunit.

Functionally, one of the primary rRNA binding proteins, it binds specifically to the 5'-end of 16S ribosomal RNA. This Haemophilus influenzae (strain 86-028NP) protein is Small ribosomal subunit protein uS17.